The chain runs to 201 residues: Dephospho-CoA kinase (201 aa).

One can recognise a DPCK domain in the interval 4–201 (IIGITGGIAS…LEGGRQDDRD (198 aa)). 12–17 (ASGKST) provides a ligand contact to ATP.

The protein belongs to the CoaE family.

It is found in the cytoplasm. It carries out the reaction 3'-dephospho-CoA + ATP = ADP + CoA + H(+). It participates in cofactor biosynthesis; coenzyme A biosynthesis; CoA from (R)-pantothenate: step 5/5. Catalyzes the phosphorylation of the 3'-hydroxyl group of dephosphocoenzyme A to form coenzyme A. The protein is Dephospho-CoA kinase of Streptococcus pneumoniae serotype 4 (strain ATCC BAA-334 / TIGR4).